The primary structure comprises 4043 residues: Hybrid PKS-NRPS synthetase thnA (4043 aa).

In terms of domain architecture, Ketosynthase family 3 (KS3) spans 6–440 (LEPIAIVGSA…GSNAHAILEE (435 aa)). Catalysis depends on for beta-ketoacyl synthase activity residues cysteine 179, histidine 319, and histidine 360. The tract at residues 558–894 (VFTGQGAQWA…FSDALGFVWT (337 aa)) is malonyl-CoA:ACP transacylase (MAT) domain. Residues 952 to 1090 (HEILGTILPE…ATVKIILGTP (139 aa)) form an N-terminal hotdog fold region. The tract at residues 952–1256 (HEILGTILPE…LSIKTFAPAT (305 aa)) is dehydratase (DH) domain. Residues 952–1258 (HEILGTILPE…IKTFAPATQA (307 aa)) form the PKS/mFAS DH domain. The active-site Proton acceptor; for dehydratase activity is the histidine 984. Residues 1105 to 1258 (LFPIDADRFY…IKTFAPATQA (154 aa)) form a C-terminal hotdog fold region. Aspartate 1166 (proton donor; for dehydratase activity) is an active-site residue. Positions 1417-1591 (LASMMKQITH…RKAGFAGVDA (175 aa)) are methyltransferase (MT) domain. The interval 2146–2320 (TYLLVGLTGK…GSTFDIGQVA (175 aa)) is ketoreductase (KR) domain. Positions 2434–2512 (EQALDILKEC…ELCDRVVDKL (79 aa)) constitute a Carrier 1 domain. Position 2472 is an O-(pantetheine 4'-phosphoryl)serine (serine 2472). The tract at residues 2521–2618 (GKQGESQPPA…PPPPEPAVER (98 aa)) is disordered. Over residues 2527–2536 (QPPASTAQPQ) the composition is skewed to low complexity. The segment covering 2537–2547 (PVAPKPKPLPV) has biased composition (pro residues). Polar residues predominate over residues 2578-2605 (YSATEASTRSGSPSEATRLSQKVSSKLQ). The interval 2626–3067 (IKSVPISLGQ…IPRFSEKQLA (442 aa)) is condensation (C) domain. The segment at 3092–3496 (QVARENPDKV…GTMVFHSRMA (405 aa)) is adenylation (A) domain. In terms of domain architecture, Carrier 2 spans 3614-3695 (TELTETMIQL…EMAQKVEETI (82 aa)). Serine 3655 carries the post-translational modification O-(pantetheine 4'-phosphoryl)serine. Positions 3736-3954 (ITGATGFLSK…DMLPAVLTAQ (219 aa)) are reductase (R) domain.

It in the C-terminal section; belongs to the NRP synthetase family.

The enzyme catalyses malate + 6 malonyl-CoA + acetyl-CoA + 2 AH2 + 2 S-adenosyl-L-methionine + 5 NADPH + 9 H(+) = trihazone A + 2 A + 2 S-adenosyl-L-homocysteine + 6 CO2 + 5 NADP(+) + 7 CoA + 6 H2O. It functions in the pathway secondary metabolite biosynthesis. Hybrid PKS-NRPS synthetase; part of the gene cluster that produces the tetronate natural products trihazones. The PKS-NRPS synthetase thnA with the help of the trans-enoyl reductase thnE are responsible for the synthesis of the carboxylmethyl containing trihazone A. The PKS portion of thnA synthesizes beta-keto-triene chain from one acetyl-CoA and 6 equivalents of malonyl-CoA, in collaboration with thnE, which selectively reduces the enoyl intermediate during the first and fourth iteration of the PKS. The NRPS domain selects and activates malate, of which the alpha-hydroxyl group attacks the completed polyketide acyl-S-ACP chain to form the ester product. Intramolecular Dieckmann cyclization catalyzed by the terminal reductase domain releases the product as trihazone A from the PKS-NPRS. The pathway begins with the formation of trihazone A by the hybrid PKS-NRPS synthetase thnA and the trans-enoyl reductase thnE. Trihazone A is further decarboxylated by the 2-oxoglutarate-dependent dioxygenase thnC to produce trihazone D. The function of the FAD-dependent monooxygenase thnD has still to be identified. The protein is Hybrid PKS-NRPS synthetase thnA of Trichoderma harzianum (Hypocrea lixii).